The following is a 159-amino-acid chain: Protein-export protein SecB (159 aa).

It belongs to the SecB family. Homotetramer, a dimer of dimers. One homotetramer interacts with 1 SecA dimer.

The protein localises to the cytoplasm. Functionally, one of the proteins required for the normal export of preproteins out of the cell cytoplasm. It is a molecular chaperone that binds to a subset of precursor proteins, maintaining them in a translocation-competent state. It also specifically binds to its receptor SecA. In Rhizobium etli (strain CIAT 652), this protein is Protein-export protein SecB.